Consider the following 333-residue polypeptide: Ketol-acid reductoisomerase (NADP(+)) (333 aa).

The 179-residue stretch at 1–179 (MFYDDDADLS…GGTRAGVIKT (179 aa)) folds into the KARI N-terminal Rossmann domain. NADP(+)-binding positions include 22 to 25 (YGSQ), lysine 45, serine 48, serine 50, and 80 to 83 (DTAQ). Histidine 105 is a catalytic residue. Glycine 131 lines the NADP(+) pocket. The region spanning 180–325 (TFKDETETDL…KKLRDLMSWV (146 aa)) is the KARI C-terminal knotted domain. Aspartate 188, glutamate 192, glutamate 224, and glutamate 228 together coordinate Mg(2+). Position 249 (serine 249) interacts with substrate.

The protein belongs to the ketol-acid reductoisomerase family. Requires Mg(2+) as cofactor.

The catalysed reaction is (2R)-2,3-dihydroxy-3-methylbutanoate + NADP(+) = (2S)-2-acetolactate + NADPH + H(+). It catalyses the reaction (2R,3R)-2,3-dihydroxy-3-methylpentanoate + NADP(+) = (S)-2-ethyl-2-hydroxy-3-oxobutanoate + NADPH + H(+). It functions in the pathway amino-acid biosynthesis; L-isoleucine biosynthesis; L-isoleucine from 2-oxobutanoate: step 2/4. Its pathway is amino-acid biosynthesis; L-valine biosynthesis; L-valine from pyruvate: step 2/4. Its function is as follows. Involved in the biosynthesis of branched-chain amino acids (BCAA). Catalyzes an alkyl-migration followed by a ketol-acid reduction of (S)-2-acetolactate (S2AL) to yield (R)-2,3-dihydroxy-isovalerate. In the isomerase reaction, S2AL is rearranged via a Mg-dependent methyl migration to produce 3-hydroxy-3-methyl-2-ketobutyrate (HMKB). In the reductase reaction, this 2-ketoacid undergoes a metal-dependent reduction by NADPH to yield (R)-2,3-dihydroxy-isovalerate. The polypeptide is Ketol-acid reductoisomerase (NADP(+)) (Mycobacterium ulcerans (strain Agy99)).